The primary structure comprises 232 residues: RNA chaperone ProQ (232 aa).

Residues 105-182 form a disordered region; that stretch reads EAKARVQAQR…REEQHTPVSD (78 aa). The segment covering 117–136 has biased composition (basic and acidic residues); it reads QQAKKREAAAAAGEKEDAPR. The span at 137–146 shows a compositional bias: basic residues; it reads RERKPRPTTP. Residues 147-177 are compositionally biased toward basic and acidic residues; it reads RRKEGAERKPRAQKPVEKAPKTVKAPREEQH.

Belongs to the ProQ family.

It localises to the cytoplasm. RNA chaperone with significant RNA binding, RNA strand exchange and RNA duplexing activities. May regulate ProP activity through an RNA-based, post-transcriptional mechanism. In Shigella boydii serotype 18 (strain CDC 3083-94 / BS512), this protein is RNA chaperone ProQ.